A 172-amino-acid chain; its full sequence is C-phycocyanin beta subunit (172 aa).

At N72 the chain carries N4-methylasparagine. C82 and C153 together coordinate (2R,3E)-phycocyanobilin.

It belongs to the phycobiliprotein family. In terms of assembly, heterodimer of an alpha and a beta subunit, which further assembles into trimers and the trimers into hexamers. Contains two covalently linked bilin chromophores.

The protein localises to the cellular thylakoid membrane. Functionally, light-harvesting photosynthetic bile pigment-protein from the phycobiliprotein complex (phycobilisome, PBS). Phycocyanin is the major phycobiliprotein in the PBS rod. The chain is C-phycocyanin beta subunit (cpcB) from Synechocystis sp. (strain PCC 6701).